Consider the following 329-residue polypeptide: Apolipoprotein E (329 aa).

The first 18 residues, 1-18, serve as a signal peptide directing secretion; that stretch reads MKVLWAALVVALLAGCWA. Tandem repeats lie at residues 92-113, 114-135, 136-157, 158-179, 180-201, 202-223, 224-245, and 246-267. The segment at 92 to 267 is 8 X 22 AA approximate tandem repeats; the sequence is TLMEETMKEI…HLDEVREQME (176 aa). The residue at position 155 (Met155) is a Methionine sulfoxide. Residue Ser159 is modified to Phosphoserine. The tract at residues 170–180 is LDL and other lipoprotein receptors binding; sequence HMRKLRKRVLR. Residue 174 to 177 coordinates heparin; that stretch reads LRKR. The lipid-binding and lipoprotein association stretch occupies residues 222-302; the sequence is HAKVDALATQ…GWFEPLVEDM (81 aa). 241–248 is a binding site for heparin; it reads GQQLRGRL. The tract at residues 278–329 is homooligomerization; the sequence is NQMRQQAEPFQARLKGWFEPLVEDMQRQWAVLVEKVQAAVGTSPTTPPVETK. Residues 290 to 302 form a specificity for association with VLDL region; sequence RLKGWFEPLVEDM.

Belongs to the apolipoprotein A1/A4/E family. In terms of assembly, homotetramer. May interact with ABCA1; functionally associated with ABCA1 in the biogenesis of HDLs. May interact with APP/A4 amyloid-beta peptide; the interaction is extremely stable in vitro but its physiological significance is unclear. May interact with MAPT. May interact with MAP2. In the cerebrospinal fluid, interacts with secreted SORL1. Interacts with PMEL; this allows the loading of PMEL luminal fragment on ILVs to induce fibril nucleation. Post-translationally, APOE exists as multiple glycosylated and sialylated glycoforms within cells and in plasma. The extent of glycosylation and sialylation are tissue and context specific. In terms of processing, glycated in plasma VLDL. Phosphorylated by FAM20C in the extracellular medium.

The protein localises to the secreted. It localises to the extracellular space. Its subcellular location is the extracellular matrix. It is found in the extracellular vesicle. The protein resides in the endosome. The protein localises to the multivesicular body. APOE is an apolipoprotein, a protein associating with lipid particles, that mainly functions in lipoprotein-mediated lipid transport between organs via the plasma and interstitial fluids. APOE is a core component of plasma lipoproteins and is involved in their production, conversion and clearance. Apolipoproteins are amphipathic molecules that interact both with lipids of the lipoprotein particle core and the aqueous environment of the plasma. As such, APOE associates with chylomicrons, chylomicron remnants, very low density lipoproteins (VLDL) and intermediate density lipoproteins (IDL) but shows a preferential binding to high-density lipoproteins (HDL). It also binds a wide range of cellular receptors including the LDL receptor/LDLR, the LDL receptor-related proteins LRP1, LRP2 and LRP8 and the very low-density lipoprotein receptor/VLDLR that mediate the cellular uptake of the APOE-containing lipoprotein particles. Finally, APOE also has a heparin-binding activity and binds heparan-sulfate proteoglycans on the surface of cells, a property that supports the capture and the receptor-mediated uptake of APOE-containing lipoproteins by cells. A main function of APOE is to mediate lipoprotein clearance through the uptake of chylomicrons, VLDLs, and HDLs by hepatocytes. APOE is also involved in the biosynthesis by the liver of VLDLs as well as their uptake by peripheral tissues ensuring the delivery of triglycerides and energy storage in muscle, heart and adipose tissues. By participating in the lipoprotein-mediated distribution of lipids among tissues, APOE plays a critical role in plasma and tissues lipid homeostasis. APOE is also involved in two steps of reverse cholesterol transport, the HDLs-mediated transport of cholesterol from peripheral tissues to the liver, and thereby plays an important role in cholesterol homeostasis. First, it is functionally associated with ABCA1 in the biogenesis of HDLs in tissues. Second, it is enriched in circulating HDLs and mediates their uptake by hepatocytes. APOE also plays an important role in lipid transport in the central nervous system, regulating neuron survival and sprouting. In Arctocephalus gazella (Antarctic fur seal), this protein is Apolipoprotein E (APOE).